The chain runs to 383 residues: Hydroxymethylglutaryl-CoA synthase (383 aa).

Asp29 contacts (3S)-3-hydroxy-3-methylglutaryl-CoA. The active-site Proton donor/acceptor is the Glu79. 7 residues coordinate (3S)-3-hydroxy-3-methylglutaryl-CoA: Cys111, Thr152, Ser201, His233, Lys242, Asn275, and Ser308. The active-site Acyl-thioester intermediate is Cys111. The active-site Proton donor/acceptor is the His233.

Belongs to the thiolase-like superfamily. HMG-CoA synthase family. Homodimer.

The catalysed reaction is acetoacetyl-CoA + acetyl-CoA + H2O = (3S)-3-hydroxy-3-methylglutaryl-CoA + CoA + H(+). It functions in the pathway metabolic intermediate biosynthesis; (R)-mevalonate biosynthesis; (R)-mevalonate from acetyl-CoA: step 2/3. Is sensitive to feedback substrate inhibition by acetoacetyl-CoA. Is inactivated by hymeglusin, which also blocks the growth of E.faecalis, indicating the critical role that the mevalonate pathway plays in isoprenoid biosynthesis. In terms of biological role, catalyzes the condensation of acetyl-CoA with acetoacetyl-CoA to form 3-hydroxy-3-methylglutaryl-CoA (HMG-CoA). Functions in the mevalonate (MVA) pathway leading to isopentenyl diphosphate (IPP), a key precursor for the biosynthesis of isoprenoid compounds. This is Hydroxymethylglutaryl-CoA synthase (mvaS) from Enterococcus faecalis (Streptococcus faecalis).